Reading from the N-terminus, the 307-residue chain is Oxygen-dependent coproporphyrinogen-III oxidase (307 aa).

S99 is a binding site for substrate. A divalent metal cation-binding residues include H103 and H113. The active-site Proton donor is H113. 115–117 (NVR) serves as a coordination point for substrate. Residues H152 and H182 each contribute to the a divalent metal cation site. The segment at 247-282 (YVEFNLVFDRGTLFGLQSGGRTESILMSMPPVANWR) is important for dimerization. A substrate-binding site is contributed by 265 to 267 (GGR).

The protein belongs to the aerobic coproporphyrinogen-III oxidase family. In terms of assembly, homodimer. It depends on a divalent metal cation as a cofactor.

The protein resides in the cytoplasm. The catalysed reaction is coproporphyrinogen III + O2 + 2 H(+) = protoporphyrinogen IX + 2 CO2 + 2 H2O. It functions in the pathway porphyrin-containing compound metabolism; protoporphyrin-IX biosynthesis; protoporphyrinogen-IX from coproporphyrinogen-III (O2 route): step 1/1. Functionally, involved in the heme biosynthesis. Catalyzes the aerobic oxidative decarboxylation of propionate groups of rings A and B of coproporphyrinogen-III to yield the vinyl groups in protoporphyrinogen-IX. In Burkholderia cenocepacia (strain ATCC BAA-245 / DSM 16553 / LMG 16656 / NCTC 13227 / J2315 / CF5610) (Burkholderia cepacia (strain J2315)), this protein is Oxygen-dependent coproporphyrinogen-III oxidase.